A 174-amino-acid chain; its full sequence is Methylated-DNA--protein-cysteine methyltransferase (174 aa).

Cys-141 serves as the catalytic Nucleophile; methyl group acceptor.

This sequence belongs to the MGMT family.

Its subcellular location is the cytoplasm. It carries out the reaction a 6-O-methyl-2'-deoxyguanosine in DNA + L-cysteinyl-[protein] = S-methyl-L-cysteinyl-[protein] + a 2'-deoxyguanosine in DNA. The enzyme catalyses a 4-O-methyl-thymidine in DNA + L-cysteinyl-[protein] = a thymidine in DNA + S-methyl-L-cysteinyl-[protein]. Functionally, involved in the cellular defense against the biological effects of O6-methylguanine (O6-MeG) and O4-methylthymine (O4-MeT) in DNA. Repairs the methylated nucleobase in DNA by stoichiometrically transferring the methyl group to a cysteine residue in the enzyme. This is a suicide reaction: the enzyme is irreversibly inactivated. The chain is Methylated-DNA--protein-cysteine methyltransferase from Thermococcus kodakarensis (strain ATCC BAA-918 / JCM 12380 / KOD1) (Pyrococcus kodakaraensis (strain KOD1)).